A 554-amino-acid polypeptide reads, in one-letter code: Probable urocanate hydratase (554 aa).

Residues 49-50 (GG), Q127, E194, 240-241 (NA), 261-265 (QTAAH), 271-272 (YI), and Y320 each bind NAD(+). The active site involves C408. G490 is a binding site for NAD(+).

The protein belongs to the urocanase family. The cofactor is NAD(+).

The protein localises to the cytoplasm. It catalyses the reaction 4-imidazolone-5-propanoate = trans-urocanate + H2O. It functions in the pathway amino-acid degradation; L-histidine degradation into L-glutamate; N-formimidoyl-L-glutamate from L-histidine: step 2/3. In terms of biological role, catalyzes the conversion of urocanate to 4-imidazolone-5-propionate. The chain is Probable urocanate hydratase from Thermoplasma acidophilum (strain ATCC 25905 / DSM 1728 / JCM 9062 / NBRC 15155 / AMRC-C165).